The chain runs to 101 residues: Aspartyl/glutamyl-tRNA(Asn/Gln) amidotransferase subunit C (101 aa).

Belongs to the GatC family. As to quaternary structure, heterotrimer of A, B and C subunits.

It catalyses the reaction L-glutamyl-tRNA(Gln) + L-glutamine + ATP + H2O = L-glutaminyl-tRNA(Gln) + L-glutamate + ADP + phosphate + H(+). The catalysed reaction is L-aspartyl-tRNA(Asn) + L-glutamine + ATP + H2O = L-asparaginyl-tRNA(Asn) + L-glutamate + ADP + phosphate + 2 H(+). Allows the formation of correctly charged Asn-tRNA(Asn) or Gln-tRNA(Gln) through the transamidation of misacylated Asp-tRNA(Asn) or Glu-tRNA(Gln) in organisms which lack either or both of asparaginyl-tRNA or glutaminyl-tRNA synthetases. The reaction takes place in the presence of glutamine and ATP through an activated phospho-Asp-tRNA(Asn) or phospho-Glu-tRNA(Gln). The protein is Aspartyl/glutamyl-tRNA(Asn/Gln) amidotransferase subunit C of Salinispora tropica (strain ATCC BAA-916 / DSM 44818 / JCM 13857 / NBRC 105044 / CNB-440).